The following is a 164-amino-acid chain: Phosphopantetheine adenylyltransferase (164 aa).

S9 contacts substrate. ATP is bound by residues 9–10 and H17; that span reads SF. Positions 41, 78, and 92 each coordinate substrate. ATP is bound by residues 93–95, E103, and 128–134; these read GLR and SRPITAT.

This sequence belongs to the bacterial CoaD family. Homohexamer. Mg(2+) serves as cofactor.

The protein localises to the cytoplasm. It catalyses the reaction (R)-4'-phosphopantetheine + ATP + H(+) = 3'-dephospho-CoA + diphosphate. The protein operates within cofactor biosynthesis; coenzyme A biosynthesis; CoA from (R)-pantothenate: step 4/5. Its function is as follows. Reversibly transfers an adenylyl group from ATP to 4'-phosphopantetheine, yielding dephospho-CoA (dPCoA) and pyrophosphate. This Allorhizobium ampelinum (strain ATCC BAA-846 / DSM 112012 / S4) (Agrobacterium vitis (strain S4)) protein is Phosphopantetheine adenylyltransferase.